Consider the following 329-residue polypeptide: MYNFKDSVSITVISGNGGSGCVSFLREKFNAKGGPDGGNGGSGGSVIFKVKENLRTLSSYKNGHVLCAKNGRPGMSFKRSGANGKDLILFVPPNTDIYNENDEALLCRLEKLNDEFVILKGGRGGLGNWNFKTSIRRAPRFAQPGESGNSLNVRLELFLVADIGLVGPPNAGKSSLLNRITSAKSRVANYPFTTKIPHLGVLRYSYDDLIIADIPGIIKGASFGVGLGTKFLKHITKTKILALVIDISEANFLESYNILLNELKSYSYKLFNKKKIIIANKLDLDSSEKNFNCLIKALGKEEKIIGISIYENRGIDELIKEFFILAKAF.

The Obg domain maps to 2–160 (YNFKDSVSIT…LNVRLELFLV (159 aa)). One can recognise an OBG-type G domain in the interval 161 to 327 (ADIGLVGPPN…LIKEFFILAK (167 aa)). Residues 167-174 (GPPNAGKS), 192-196 (FTTKI), 213-216 (DIPG), 280-283 (NKLD), and 308-310 (SIY) each bind GTP. 2 residues coordinate Mg(2+): serine 174 and threonine 194.

It belongs to the TRAFAC class OBG-HflX-like GTPase superfamily. OBG GTPase family. In terms of assembly, monomer. The cofactor is Mg(2+).

It localises to the cytoplasm. An essential GTPase which binds GTP, GDP and possibly (p)ppGpp with moderate affinity, with high nucleotide exchange rates and a fairly low GTP hydrolysis rate. Plays a role in control of the cell cycle, stress response, ribosome biogenesis and in those bacteria that undergo differentiation, in morphogenesis control. In Borrelia garinii subsp. bavariensis (strain ATCC BAA-2496 / DSM 23469 / PBi) (Borreliella bavariensis), this protein is GTPase Obg.